The following is a 358-amino-acid chain: Ganglioside-induced differentiation-associated protein 1 (358 aa).

In terms of domain architecture, GST N-terminal spans 24–105; the sequence is VKLILYHWTH…YLEQTFLDER (82 aa). Residues Lys50, Lys172, Lys173, Lys188, and Lys190 each participate in a glycyl lysine isopeptide (Lys-Gly) (interchain with G-Cter in ubiquitin) cross-link. One can recognise a GST C-terminal domain in the interval 153–309; the sequence is PAYATTRIRS…LISAVLPTAF (157 aa). Residue Lys203 is modified to N6-acetyllysine; alternate. Residue Lys203 forms a Glycyl lysine isopeptide (Lys-Gly) (interchain with G-Cter in ubiquitin); alternate linkage. Glycyl lysine isopeptide (Lys-Gly) (interchain with G-Cter in ubiquitin) cross-links involve residues Lys206, Lys207, and Lys214. A run of 2 helical transmembrane segments spans residues 292–312 and 320–340; these read VLGH…FRVA and LGTT…FMLF. The required for mitochondrial localization stretch occupies residues 320–358; it reads LGTTLVVGLLAGVGYFAFMLFRKRLGSMILAFRPRPNYF.

The protein belongs to the GST superfamily. Homodimer. Ubiquitinated by PRKN during mitophagy, leading to its degradation and enhancement of mitophagy. Deubiquitinated by USP30. As to expression, highly expressed in whole brain and spinal cord. Predominant expression in central tissues of the nervous system not only in neurons but also in Schwann cells.

It is found in the mitochondrion outer membrane. Its subcellular location is the cytoplasm. In terms of biological role, regulates the mitochondrial network by promoting mitochondrial fission. The chain is Ganglioside-induced differentiation-associated protein 1 (GDAP1) from Homo sapiens (Human).